Reading from the N-terminus, the 121-residue chain is Large ribosomal subunit protein uL18 (121 aa).

The segment at 1–25 (MKIVISKPDKNKIRQKRHRRVRGKL) is disordered. Positions 13 to 23 (IRQKRHRRVRG) are enriched in basic residues.

It belongs to the universal ribosomal protein uL18 family. In terms of assembly, part of the 50S ribosomal subunit; part of the 5S rRNA/L5/L18/L25 subcomplex. Contacts the 5S and 23S rRNAs.

This is one of the proteins that bind and probably mediate the attachment of the 5S RNA into the large ribosomal subunit, where it forms part of the central protuberance. The chain is Large ribosomal subunit protein uL18 from Streptococcus pyogenes serotype M28 (strain MGAS6180).